The following is a 190-amino-acid chain: Guanylate kinase (190 aa).

Residues 8–186 (ARPTVLTGPS…ALAELEKQMN (179 aa)) form the Guanylate kinase-like domain. 15–22 (GPSGVGKG) is a binding site for ATP.

This sequence belongs to the guanylate kinase family.

The protein resides in the cytoplasm. The enzyme catalyses GMP + ATP = GDP + ADP. It carries out the reaction dZMP + ATP = dZDP + ADP. It participates in purine metabolism. In terms of biological role, essential for recycling GMP and indirectly, cGMP. Functionally, (Microbial infection) Catalyzes the phosphorylation of dZMP to dZDP, when the bacterium is infected by a phage that produces the substrate for the synthesis of dZTP (2- amino-2'-deoxyadenosine 5'-triphosphate), which is then used by the phage as a DNA polymerase substrate. The chain is Guanylate kinase from Synechococcus sp. (strain CC9311).